The primary structure comprises 814 residues: Syn-copalyl diphosphate synthase TPS3, chloroplastic (814 aa).

The N-terminal 52 residues, 1-52, are a transit peptide targeting the chloroplast; it reads MCSLSTLSPNFSNAYGSKSVSSTASRFPCWQRSNETWKTQSREVIHWTYVVR. K248 serves as a coordination point for substrate. Mg(2+)-binding residues include D386 and D388. The DXDD motif motif lies at 386-389; that stretch reads DIDD. Residue K472 coordinates substrate.

This sequence belongs to the terpene synthase family. The cofactor is Mg(2+). Mostly expressed in trichomes of leaves and fruits.

The protein resides in the plastid. Its subcellular location is the chloroplast. It catalyses the reaction (2E,6E,10E)-geranylgeranyl diphosphate = 9alpha-copalyl diphosphate. It participates in secondary metabolite biosynthesis; terpenoid biosynthesis. Functionally, involved in the biosynthesis of labdane-type diterpenoid including cleroda-dienols, and peregrinol lactones and furan derivatives, dopaminergic diterpenoids that can bind to dopamine receptors in the human pituitary gland, have probably ability to lower prolactin levels, and are used to treat menstrual cycle disorders (e.g. premenstrual syndrome and mastodynia). Terpene synthase that produces syn-copalyl diphosophate from geranylgeranyl diphosphate (GGPP). The chain is Syn-copalyl diphosphate synthase TPS3, chloroplastic from Vitex agnus-castus (Chaste tree).